A 377-amino-acid polypeptide reads, in one-letter code: METISPFVAIRRDLHKIPELGFQEFKTQQYLLNYIQSLPQERLDVRTWKTGIFVKVSGTAPRKTIGYRADIDGLPISEETGLPYRSEHAGQMHACGHDVHMSIALGVLTHFAHNPIRDDLLFIFQPAEEGPGGAKPMLESDIMREWKPDMIVALHIAPEYPVGTIATKEGLLFANTSELFIDLKGKGGHAAFPHLANDMVVAACALVTQLQSIVARNVDPLDSAVITIGKITSGTVQNVIAEHARLEGTIRTLSIDAMQAVKRRIEALVRGVEVAYECEAVIDYGAMYHEVYNNPALTTEFIQFAETHTDMNVIRCKEAMTGEDFGYMLAEIPGFMFWLGVDSPYGLHHAKLVPNEAAIDRAIAFLISYFSWKGNME.

Asp-70 is an active-site residue. Residue Glu-129 is the Proton acceptor of the active site.

Belongs to the peptidase M20A family. N-acetyldiaminopimelate deacetylase subfamily.

It catalyses the reaction N-acetyl-(2S,6S)-2,6-diaminopimelate + H2O = (2S,6S)-2,6-diaminopimelate + acetate. Its pathway is amino-acid biosynthesis; L-lysine biosynthesis via DAP pathway; LL-2,6-diaminopimelate from (S)-tetrahydrodipicolinate (acetylase route): step 3/3. Its function is as follows. Catalyzes the conversion of N-acetyl-diaminopimelate to diaminopimelate and acetate. The protein is N-acetyldiaminopimelate deacetylase of Geobacillus thermodenitrificans (strain NG80-2).